A 196-amino-acid polypeptide reads, in one-letter code: SPRY domain-containing protein 7 (196 aa).

An N-acetylalanine modification is found at Ala-2. The 183-residue stretch at 2–184 (ATSVLCCLRC…FSEFYHTPPP (183 aa)) folds into the B30.2/SPRY domain.

This is SPRY domain-containing protein 7 (SPRYD7) from Homo sapiens (Human).